We begin with the raw amino-acid sequence, 512 residues long: SWI/SNF complex subunit SWI3A (512 aa).

One can recognise an SWIRM domain in the interval 13–110 (YTIPAQSSWF…FSSSLKKNDH (98 aa)). The SANT domain maps to 223–274 (SAAAVWTEEEILLLLESVLKHGDDWELISQSVSTKSRLDCISKLIELPFGEF). Residues 291–325 (DENTEQVQTDGQEHEETETREEKEDRVNEDEPPAK) are disordered. Residues 424-488 (ALGAAAAQAK…IEGVKETIIQ (65 aa)) adopt a coiled-coil conformation.

Homodimers and heterodimers. Interacts with SWI3B, SWI3C, BSH, and the C-terminus of FCA, but not with BRM or SWI3D. In terms of tissue distribution, expressed in roots, stems, leaves and flowers, but not in siliques.

It localises to the nucleus. Component of a multiprotein complex equivalent of the SWI/SNF complex, an ATP-dependent chromatin-remodeling complex, which is required for the positive and negative regulation of gene expression of a large number of genes. It changes chromatin structure by altering DNA-histone contacts within a nucleosome, leading eventually to a change in nucleosome position, thus facilitating or repressing binding of gene-specific transcription factors. In Arabidopsis thaliana (Mouse-ear cress), this protein is SWI/SNF complex subunit SWI3A (SWI3A).